Here is a 352-residue protein sequence, read N- to C-terminus: Histidine biosynthesis bifunctional protein HisB (352 aa).

Positions 1–163 are histidinol-phosphatase; it reads MKKILFIDRD…MVASAIINDA (163 aa). The active-site Nucleophile is the D8. The Mg(2+) site is built by D8 and D10. Catalysis depends on D10, which acts as the Proton donor. Residues C91, H93, C99, and C101 each contribute to the Zn(2+) site. Residue D128 coordinates Mg(2+). Positions 164–352 are imidazoleglycerol-phosphate dehydratase; the sequence is RKASVQRKTK…NYLPSTKGVL (189 aa).

This sequence in the N-terminal section; belongs to the histidinol-phosphatase family. In the C-terminal section; belongs to the imidazoleglycerol-phosphate dehydratase family. Requires Mg(2+) as cofactor. Zn(2+) serves as cofactor.

The protein resides in the cytoplasm. It catalyses the reaction D-erythro-1-(imidazol-4-yl)glycerol 3-phosphate = 3-(imidazol-4-yl)-2-oxopropyl phosphate + H2O. The catalysed reaction is L-histidinol phosphate + H2O = L-histidinol + phosphate. Its pathway is amino-acid biosynthesis; L-histidine biosynthesis; L-histidine from 5-phospho-alpha-D-ribose 1-diphosphate: step 6/9. It functions in the pathway amino-acid biosynthesis; L-histidine biosynthesis; L-histidine from 5-phospho-alpha-D-ribose 1-diphosphate: step 8/9. The sequence is that of Histidine biosynthesis bifunctional protein HisB from Legionella pneumophila (strain Lens).